The primary structure comprises 219 residues: 7-cyano-7-deazaguanine synthase (219 aa).

10–20 is a binding site for ATP; the sequence is FSGGQDSTTCL. Residues cysteine 188, cysteine 196, cysteine 199, and cysteine 202 each contribute to the Zn(2+) site.

This sequence belongs to the QueC family. Requires Zn(2+) as cofactor.

It carries out the reaction 7-carboxy-7-deazaguanine + NH4(+) + ATP = 7-cyano-7-deazaguanine + ADP + phosphate + H2O + H(+). It functions in the pathway purine metabolism; 7-cyano-7-deazaguanine biosynthesis. Its function is as follows. Catalyzes the ATP-dependent conversion of 7-carboxy-7-deazaguanine (CDG) to 7-cyano-7-deazaguanine (preQ(0)). The sequence is that of 7-cyano-7-deazaguanine synthase from Neisseria meningitidis serogroup B (strain ATCC BAA-335 / MC58).